Here is a 450-residue protein sequence, read N- to C-terminus: UDP-N-acetylmuramoylalanine--D-glutamate ligase (450 aa).

119 to 125 lines the ATP pocket; that stretch reads GSNGKTT.

This sequence belongs to the MurCDEF family.

It is found in the cytoplasm. It carries out the reaction UDP-N-acetyl-alpha-D-muramoyl-L-alanine + D-glutamate + ATP = UDP-N-acetyl-alpha-D-muramoyl-L-alanyl-D-glutamate + ADP + phosphate + H(+). The protein operates within cell wall biogenesis; peptidoglycan biosynthesis. In terms of biological role, cell wall formation. Catalyzes the addition of glutamate to the nucleotide precursor UDP-N-acetylmuramoyl-L-alanine (UMA). In Streptococcus thermophilus (strain ATCC BAA-491 / LMD-9), this protein is UDP-N-acetylmuramoylalanine--D-glutamate ligase.